We begin with the raw amino-acid sequence, 354 residues long: Squamosa promoter-binding-like protein 15 (354 aa).

Positions 1–25 (MELLMCSGQAESGGSSSTESSSLSG) are disordered. Residues 7-25 (SGQAESGGSSSTESSSLSG) are compositionally biased toward low complexity. Residues 56–133 (TARCQVEGCR…ACHNERRRKP (78 aa)) form an SBP-type zinc finger. Zn(2+) contacts are provided by cysteine 59, cysteine 64, cysteine 81, histidine 84, cysteine 100, cysteine 103, histidine 107, and cysteine 119. The short motif at 116–132 (KRSCRRRLACHNERRRK) is the Bipartite nuclear localization signal element.

Requires Zn(2+) as cofactor.

It localises to the nucleus. Functionally, trans-acting factor that binds specifically to the consensus nucleotide sequence 5'-TNCGTACAA-3'. The sequence is that of Squamosa promoter-binding-like protein 15 (SPL15) from Arabidopsis thaliana (Mouse-ear cress).